Here is a 332-residue protein sequence, read N- to C-terminus: Decaprenyl-phosphate phosphoribosyltransferase (332 aa).

Basic and acidic residues predominate over residues 1–12 (MSEHAAEHHRDT). Residues 1 to 36 (MSEHAAEHHRDTQNFLTSEPHTTAIEDNKKRQPPKN) form a disordered region. 2 consecutive transmembrane segments (helical) span residues 50–70 (WVKNVLVLAAPLAAGADAIFN) and 74–94 (IIDVAIAFVVFCFGASAIYLV). Positions 52 and 92 each coordinate 5-phospho-alpha-D-ribose 1-diphosphate. Asparagine 95 and aspartate 99 together coordinate Mg(2+). Lysine 109 is a 5-phospho-alpha-D-ribose 1-diphosphate binding site. A run of 2 helical transmembrane segments spans residues 114-134 (IAAGVLPVGMAYGMAVALIAL) and 146-166 (VALACVIGVYIALQLGYCFGW). 5-phospho-alpha-D-ribose 1-diphosphate contacts are provided by lysine 167 and arginine 184. Transmembrane regions (helical) follow at residues 169 to 189 (MPVIDIALVSSGFMLRAMAGG) and 190 to 210 (VAAGIELSQWFLLVAAFGSLF). Lysine 215 lines the trans,octa-cis-decaprenyl phosphate pocket. Helical transmembrane passes span 244–264 (FVWTMAATAVVMSYALWGFDL), 273–293 (PWYQISMVPFTIAILRYAAGV), and 310–330 (VLQVLALAWVFCIVMAVYIMP).

Belongs to the UbiA prenyltransferase family. DPPR synthase subfamily. Mg(2+) is required as a cofactor.

The protein resides in the cell inner membrane. The catalysed reaction is trans,octa-cis-decaprenyl phosphate + 5-phospho-alpha-D-ribose 1-diphosphate + H(+) = trans,octa-cis-decaprenylphospho-beta-D-ribofuranose 5-phosphate + diphosphate. It participates in cell wall biogenesis; cell wall polysaccharide biosynthesis. Its function is as follows. Involved in the biosynthesis of decaprenylphosphoryl arabinose (DPA) a precursor for arabinan synthesis in mycobacterial cell wall biosynthesis. Catalyzes the transfer of a 5-phosphoribosyl residue from phosphoribose diphosphate (PRPP) to decaprenyl phosphate (DP) to form decaprenylphosphoryl-5-phosphoribose (DPPR). This Corynebacterium glutamicum (strain ATCC 13032 / DSM 20300 / JCM 1318 / BCRC 11384 / CCUG 27702 / LMG 3730 / NBRC 12168 / NCIMB 10025 / NRRL B-2784 / 534) protein is Decaprenyl-phosphate phosphoribosyltransferase.